Reading from the N-terminus, the 514-residue chain is ATP synthase subunit alpha (514 aa).

170 to 177 (GDRQIGKT) contacts ATP.

The protein belongs to the ATPase alpha/beta chains family. F-type ATPases have 2 components, CF(1) - the catalytic core - and CF(0) - the membrane proton channel. CF(1) has five subunits: alpha(3), beta(3), gamma(1), delta(1), epsilon(1). CF(0) has three main subunits: a(1), b(2) and c(9-12). The alpha and beta chains form an alternating ring which encloses part of the gamma chain. CF(1) is attached to CF(0) by a central stalk formed by the gamma and epsilon chains, while a peripheral stalk is formed by the delta and b chains.

The protein resides in the cell inner membrane. The enzyme catalyses ATP + H2O + 4 H(+)(in) = ADP + phosphate + 5 H(+)(out). Its function is as follows. Produces ATP from ADP in the presence of a proton gradient across the membrane. The alpha chain is a regulatory subunit. The polypeptide is ATP synthase subunit alpha (Stutzerimonas stutzeri (strain A1501) (Pseudomonas stutzeri)).